Reading from the N-terminus, the 444-residue chain is ATP-dependent protease ATPase subunit HslU (444 aa).

ATP is bound by residues I18 and 60 to 65 (GVGKTE). The disordered stretch occupies residues 143-163 (WGEVENHDSHSSTRQAFRKKL). ATP-binding residues include D257, E322, and R394.

It belongs to the ClpX chaperone family. HslU subfamily. A double ring-shaped homohexamer of HslV is capped on each side by a ring-shaped HslU homohexamer. The assembly of the HslU/HslV complex is dependent on binding of ATP.

It is found in the cytoplasm. ATPase subunit of a proteasome-like degradation complex; this subunit has chaperone activity. The binding of ATP and its subsequent hydrolysis by HslU are essential for unfolding of protein substrates subsequently hydrolyzed by HslV. HslU recognizes the N-terminal part of its protein substrates and unfolds these before they are guided to HslV for hydrolysis. This chain is ATP-dependent protease ATPase subunit HslU, found in Haemophilus influenzae (strain 86-028NP).